A 405-amino-acid chain; its full sequence is SPbeta prophage-derived uncharacterized protein YonJ (405 aa).

A coiled-coil region spans residues 72-101 (DESNNSLLELELKKVEIMEERKKLQAVKHE).

The chain is SPbeta prophage-derived uncharacterized protein YonJ (yonJ) from Bacillus subtilis (strain 168).